The sequence spans 364 residues: MTKKLYKIAVLPGDGIGPEIIQEAYKIIDVLQKKFSFNVKMHEYDIGGISIDKHGTALTQETIEGCENSDAILFGSVGGSKWDHLPEIEKPEKAGLLKLRKHFNLFANIRPCKLSQHLLDISPLKNSIIKKGIDLICIRELTGGIYFGKSNKITNIDDPYAFDTEIYFRSEIKRIAKIAFQIAQSRKKKIVSIDKANVLKSSILWRDTVNKMAYKFPNVKLEHMYIDNATMELIKNPSSFDVILCSNLFGDIISDECAAIIGSIGLLPSASLNKSGFGLYEPAGGSAPNIAGKTIANPIAQILSLSMLLKYSLHLPFLSSCIDEAVHEALVKKYMTMDISKNPQNFLKTNEIGDKISDLLAKKA.

79 to 92 (GSKWDHLPEIEKPE) is an NAD(+) binding site. 4 residues coordinate substrate: R100, R110, R139, and D227. 3 residues coordinate Mg(2+): D227, D251, and D255. 285 to 297 (GSAPNIAGKTIAN) lines the NAD(+) pocket.

It belongs to the isocitrate and isopropylmalate dehydrogenases family. LeuB type 1 subfamily. As to quaternary structure, homodimer. Mg(2+) serves as cofactor. The cofactor is Mn(2+).

The protein resides in the cytoplasm. It carries out the reaction (2R,3S)-3-isopropylmalate + NAD(+) = 4-methyl-2-oxopentanoate + CO2 + NADH. It functions in the pathway amino-acid biosynthesis; L-leucine biosynthesis; L-leucine from 3-methyl-2-oxobutanoate: step 3/4. Catalyzes the oxidation of 3-carboxy-2-hydroxy-4-methylpentanoate (3-isopropylmalate) to 3-carboxy-4-methyl-2-oxopentanoate. The product decarboxylates to 4-methyl-2 oxopentanoate. This Buchnera aphidicola subsp. Thelaxes suberi protein is 3-isopropylmalate dehydrogenase.